Reading from the N-terminus, the 151-residue chain is Guanylate kinase homolog (151 aa).

The Guanylate kinase-like domain occupies 1-141; it reads MEREGVDYHY…AYSKLIQILQ (141 aa).

It belongs to the guanylate kinase family.

The sequence is that of Guanylate kinase homolog from Bos taurus (Bovine).